Reading from the N-terminus, the 391-residue chain is DNA repair protein NreB (391 aa).

The C4-type zinc finger occupies 3–17 (CIECRGRMLCSRKVC). A PIP motif motif is present at residues 384-391 (QRTLWEFM).

It belongs to the Nre family. In terms of assembly, interacts with the DNA polymerase sliding clamp (PCNA) via the PIP (PCNA-interacting peptide) motif.

In terms of biological role, involved in DNA damage repair. In Archaeoglobus fulgidus (strain ATCC 49558 / DSM 4304 / JCM 9628 / NBRC 100126 / VC-16), this protein is DNA repair protein NreB.